Reading from the N-terminus, the 540-residue chain is Chaperonin GroEL (540 aa).

Residues 30–33, 87–91, glycine 414, 479–481, and aspartate 495 each bind ATP; these read TLGP, DGTTT, and NAL.

It belongs to the chaperonin (HSP60) family. Forms a cylinder of 14 subunits composed of two heptameric rings stacked back-to-back. Interacts with the co-chaperonin GroES.

It localises to the cytoplasm. It carries out the reaction ATP + H2O + a folded polypeptide = ADP + phosphate + an unfolded polypeptide.. In terms of biological role, together with its co-chaperonin GroES, plays an essential role in assisting protein folding. The GroEL-GroES system forms a nano-cage that allows encapsulation of the non-native substrate proteins and provides a physical environment optimized to promote and accelerate protein folding. The sequence is that of Chaperonin GroEL from Rubrobacter xylanophilus (strain DSM 9941 / JCM 11954 / NBRC 16129 / PRD-1).